We begin with the raw amino-acid sequence, 389 residues long: MVSVSEIRQAQRAEGPATIMAIGTANPSNCVEQSTYPDFYFKITNSEHKVELKEKFQRMCDKSMIKRRYMYLTEEILKENPSVCEYMAPSLDARQDMVVVEVPRLGKEAAVKAIKEWGQPKSKITHLIFCTTSGVDMPGADYQLTKLLGLRPYVKRYMMYQQGCFAGGTVLRLAKDLAENNKGARVLVVCSEVTAVTFRGPSDTHLDSLVGQALFGDGAAALIVGSDPIPEIEKPIFEMVWTAQTIAPDSEGAIDGHLVEAGLTFHLLKDVPGIVSKNIDKALIEAFQPLNISDYNSIFWIAHPGGPAILDQVEEKLGLKPEKMKATREVLSEYGNMSSACVLFILDEMRKKSAQAGLKTTGEGLDWGVLFGFGPGLTIETVVLHSVAI.

C164 is an active-site residue.

It belongs to the thiolase-like superfamily. Chalcone/stilbene synthases family.

The catalysed reaction is (E)-4-coumaroyl-CoA + 3 malonyl-CoA + 3 H(+) = 2',4,4',6'-tetrahydroxychalcone + 3 CO2 + 4 CoA. The protein operates within secondary metabolite biosynthesis; flavonoid biosynthesis. In terms of biological role, the primary product of this enzyme is 4,2',4',6'-tetrahydroxychalcone (also termed naringenin-chalcone or chalcone) which can under specific conditions spontaneously isomerize into naringenin. This chain is Chalcone synthase 4-1 (CHS4-1), found in Medicago sativa (Alfalfa).